The sequence spans 268 residues: MDFTAKIKELERELSETSDYKTLQKKTISLRSELNTLSHSLTSYEKEHFSNDIENVLKSINAKLSESKGKKRLFSFKQKNSSSAVHKNVERTELANAPAYTTTLKKHYVLEKGDSAFENLEFCTVTSTTDYSGNSALSGSLCFRNITKCVINLQRIFFQTGSIFITDCTDSIIFLRSPSDKDFQIRLRDLKNCKILIEKLSPSIDCKQVVIIENCHKCIFNASTRDHLIIQDFSNPFQSEETEDNSAFAFEDFDICNKDTMQLFRAYL.

Residues Pro98–Ile255 form the C-CAP/cofactor C-like domain.

It is found in the cytoplasm. The protein localises to the cytoskeleton. Functionally, tubulin-folding protein; involved in the early step of the tubulin folding pathway. In Saccharomyces cerevisiae (strain ATCC 204508 / S288c) (Baker's yeast), this protein is Tubulin-specific chaperone C (CIN2).